The chain runs to 430 residues: Nacrein-like protein P2 (430 aa).

N-linked (GlcNAc...) asparagine glycosylation occurs at Asn-27. The Alpha-carbonic anhydrase domain maps to 33-429 (AGFSYDRSIC…KNKVTVYKSF (397 aa)). Zn(2+) contacts are provided by His-132, His-134, and His-157. Residues 201-312 (DEPDDEECKR…GENGHKHGCR (112 aa)) are disordered. Residues 207–219 (ECKRILKGHHPDN) are compositionally biased toward basic and acidic residues. Low complexity predominate over residues 220–304 (NENGNGDNGN…NNGENGNNGE (85 aa)). A run of 27 repeats spans residues 225 to 227 (GDN), 228 to 230 (GNN), 231 to 233 (GYN), 234 to 236 (GDN), 237 to 239 (GNN), 240 to 242 (GDN), 243 to 245 (GNN), 246 to 248 (GYN), 249 to 251 (GDN), 252 to 254 (GNN), 255 to 257 (GVN), 258 to 260 (GNN), 261 to 263 (GYN), 264 to 266 (GDN), 267 to 269 (GNN), 270 to 272 (GDN), 273 to 275 (GNN), 276 to 278 (GYN), 279 to 281 (GDN), 282 to 284 (GNN), 285 to 287 (GDN), 288 to 290 (GNN), 291 to 293 (GEN), 294 to 296 (GNN), 297 to 299 (GEN), 300 to 301 (GN), and 303 to 305 (GEN). Residues 225 to 305 (GDNGNNGYNG…NGENGNNGEN (81 aa)) are 27 X 3 AA approximate tandem repeats of G-X-N. Residue 370–371 (TT) participates in substrate binding.

The protein belongs to the alpha-carbonic anhydrase family. Homooligomer; disulfide-linked. May also be disulfide-linked to insoluble organic matrix. Zn(2+) is required as a cofactor. In terms of tissue distribution, expressed in the mantle.

It is found in the secreted. The protein resides in the extracellular space. Its subcellular location is the extracellular matrix. The catalysed reaction is hydrogencarbonate + H(+) = CO2 + H2O. Acts as a negative regulator for calcification in the shells of mollusks. May function both as a calcium concentrator and as a carbonic anhydrase required for production of carbonate ions, which are assembled to CaCO(3) at mineralization sites. Is important for shell formation in both the calcitic prismatic layer and the aragonitic nacreous layer. Shows inhibitory activity of crystal formation when present in free state but, when attached to the insoluble matrix, may regulate the form and size of aragonite crystal. In Mizuhopecten yessoensis (Japanese scallop), this protein is Nacrein-like protein P2.